Reading from the N-terminus, the 790-residue chain is uncharacterized protein (790 aa).

The TBDR plug domain occupies 37-172 (APVPVPVNGN…NGGVIDAKIK (136 aa)). In terms of domain architecture, TBDR beta-barrel spans 178–790 (DSKVKLGYRT…TFWLDVSMKF (613 aa)).

Belongs to the TonB-dependent receptor family.

The protein resides in the cell outer membrane. This is an uncharacterized protein from Escherichia coli (strain K12).